The chain runs to 252 residues: Triosephosphate isomerase (252 aa).

Residue 9–11 coordinates substrate; that stretch reads NWK. Catalysis depends on histidine 95, which acts as the Electrophile. The active-site Proton acceptor is the glutamate 167. Substrate is bound by residues glycine 173, serine 213, and 234-235; that span reads GG.

It belongs to the triosephosphate isomerase family. Homodimer.

Its subcellular location is the cytoplasm. It carries out the reaction D-glyceraldehyde 3-phosphate = dihydroxyacetone phosphate. It functions in the pathway carbohydrate biosynthesis; gluconeogenesis. Its pathway is carbohydrate degradation; glycolysis; D-glyceraldehyde 3-phosphate from glycerone phosphate: step 1/1. Involved in the gluconeogenesis. Catalyzes stereospecifically the conversion of dihydroxyacetone phosphate (DHAP) to D-glyceraldehyde-3-phosphate (G3P). This Lactiplantibacillus plantarum (strain ATCC BAA-793 / NCIMB 8826 / WCFS1) (Lactobacillus plantarum) protein is Triosephosphate isomerase.